Here is a 376-residue protein sequence, read N- to C-terminus: Queuine tRNA-ribosyltransferase (376 aa).

The active-site Proton acceptor is the D92. Residues 92–96 (DSGGF), D146, Q190, and G217 contribute to the substrate site. The segment at 248–254 (GVGRPED) is RNA binding. D267 (nucleophile) is an active-site residue. Residues 272–276 (TRNAR) are RNA binding; important for wobble base 34 recognition. The Zn(2+) site is built by C305, C307, C310, and H337.

This sequence belongs to the queuine tRNA-ribosyltransferase family. As to quaternary structure, homodimer. Within each dimer, one monomer is responsible for RNA recognition and catalysis, while the other monomer binds to the replacement base PreQ1. Zn(2+) is required as a cofactor.

It catalyses the reaction 7-aminomethyl-7-carbaguanine + guanosine(34) in tRNA = 7-aminomethyl-7-carbaguanosine(34) in tRNA + guanine. The protein operates within tRNA modification; tRNA-queuosine biosynthesis. Functionally, catalyzes the base-exchange of a guanine (G) residue with the queuine precursor 7-aminomethyl-7-deazaguanine (PreQ1) at position 34 (anticodon wobble position) in tRNAs with GU(N) anticodons (tRNA-Asp, -Asn, -His and -Tyr). Catalysis occurs through a double-displacement mechanism. The nucleophile active site attacks the C1' of nucleotide 34 to detach the guanine base from the RNA, forming a covalent enzyme-RNA intermediate. The proton acceptor active site deprotonates the incoming PreQ1, allowing a nucleophilic attack on the C1' of the ribose to form the product. After dissociation, two additional enzymatic reactions on the tRNA convert PreQ1 to queuine (Q), resulting in the hypermodified nucleoside queuosine (7-(((4,5-cis-dihydroxy-2-cyclopenten-1-yl)amino)methyl)-7-deazaguanosine). This is Queuine tRNA-ribosyltransferase from Stenotrophomonas maltophilia (strain K279a).